A 390-amino-acid polypeptide reads, in one-letter code: Aspergillopepsin-1 (390 aa).

The first 19 residues, M1–A19, serve as a signal peptide directing secretion. A propeptide spans A20–A67 (activation peptide). Residue T70 is glycosylated (O-linked (Man...) threonine). Residues Y84–A387 enclose the Peptidase A1 domain. Residues D100 and D281 contribute to the active site.

This sequence belongs to the peptidase A1 family.

The protein resides in the secreted. It carries out the reaction Hydrolysis of proteins with broad specificity. Generally favors hydrophobic residues in P1 and P1', but also accepts Lys in P1, which leads to activation of trypsinogen. Does not clot milk.. Its activity is regulated as follows. Inhibited by the microbial peptide pepstatin. Its function is as follows. Secreted aspartic endopeptidase that allows assimilation of proteinaceous substrates. The scissile peptide bond is attacked by a nucleophilic water molecule activated by two aspartic residues in the active site. Shows a broad primary substrate specificity. Favors hydrophobic residues at the P1 and P1' positions, but also accepts a lysine residue in the P1 position, leading to the activation of trypsinogen and chymotrypsinogen A. The polypeptide is Aspergillopepsin-1 (pepA) (Aspergillus oryzae (Yellow koji mold)).